The primary structure comprises 701 residues: Elongation factor G (701 aa).

Positions 8-290 (SRYRNIGISA…AVIEYLPAPT (283 aa)) constitute a tr-type G domain. GTP is bound by residues 17 to 24 (AHIDAGKT), 88 to 92 (DTPGH), and 142 to 145 (NKMD).

The protein belongs to the TRAFAC class translation factor GTPase superfamily. Classic translation factor GTPase family. EF-G/EF-2 subfamily.

The protein resides in the cytoplasm. Functionally, catalyzes the GTP-dependent ribosomal translocation step during translation elongation. During this step, the ribosome changes from the pre-translocational (PRE) to the post-translocational (POST) state as the newly formed A-site-bound peptidyl-tRNA and P-site-bound deacylated tRNA move to the P and E sites, respectively. Catalyzes the coordinated movement of the two tRNA molecules, the mRNA and conformational changes in the ribosome. This is Elongation factor G from Actinobacillus pleuropneumoniae serotype 5b (strain L20).